A 171-amino-acid chain; its full sequence is ATP synthase subunit b (171 aa).

The helical transmembrane segment at 24-44 (INLVIVIGVLYWFLKGFLGGI) threads the bilayer.

It belongs to the ATPase B chain family. As to quaternary structure, F-type ATPases have 2 components, F(1) - the catalytic core - and F(0) - the membrane proton channel. F(1) has five subunits: alpha(3), beta(3), gamma(1), delta(1), epsilon(1). F(0) has four main subunits: a(1), b(1), b'(1) and c(10-14). The alpha and beta chains form an alternating ring which encloses part of the gamma chain. F(1) is attached to F(0) by a central stalk formed by the gamma and epsilon chains, while a peripheral stalk is formed by the delta, b and b' chains.

The protein resides in the cellular thylakoid membrane. Its function is as follows. F(1)F(0) ATP synthase produces ATP from ADP in the presence of a proton or sodium gradient. F-type ATPases consist of two structural domains, F(1) containing the extramembraneous catalytic core and F(0) containing the membrane proton channel, linked together by a central stalk and a peripheral stalk. During catalysis, ATP synthesis in the catalytic domain of F(1) is coupled via a rotary mechanism of the central stalk subunits to proton translocation. Functionally, component of the F(0) channel, it forms part of the peripheral stalk, linking F(1) to F(0). In Synechococcus sp. (strain WH7803), this protein is ATP synthase subunit b.